Reading from the N-terminus, the 382-residue chain is Layilin (382 aa).

Residues 1 to 21 (MRPGTALQAVLLAVLLVGLRA) form the signal peptide. Topologically, residues 22–235 (ATGRLLSASD…SREAALNLAY (214 aa)) are extracellular. One can recognise a C-type lectin domain in the interval 45–185 (TQRPCYKVIY…CNMKNNFICK (141 aa)). 2 disulfide bridges follow: Cys71–Cys184 and Cys150–Cys176. The N-linked (GlcNAc...) asparagine glycan is linked to Asn117. The chain crosses the membrane as a helical span at residues 236 to 256 (ILIPSIPLLLLLVVTTVVCWV). At 257 to 382 (WICRKRKREQ…GWVENEIYGY (126 aa)) the chain is on the cytoplasmic side. The interval 266-285 (QPDPSTKKQHTIWPSPHQGN) is disordered. Phosphoserine is present on residues Ser286 and Ser299. The segment at 330–374 (DYDNMAVNPSESGFVTLVSVESGFVTNDIYEFSPDQMGRSKESGW) is interaction with NF2. Residues 337–382 (NPSESGFVTLVSVESGFVTNDIYEFSPDQMGRSKESGWVENEIYGY) form an interaction with TLN1 region. A run of 5 repeats spans residues 340–344 (ESGFV), 350–354 (ESGFV), 356–359 (NDIY), 371–375 (ESGWV), and 377–380 (NEIY). The 3 X 5 AA repeats of E-S-G-X-V stretch occupies residues 340–375 (ESGFVTLVSVESGFVTNDIYEFSPDQMGRSKESGWV). The 2 X 4 AA repeats of N-X-I-Y stretch occupies residues 356–380 (NDIYEFSPDQMGRSKESGWVENEIY).

Interacts with NF2, RDX and TLN1.

Its subcellular location is the membrane. In terms of biological role, receptor for hyaluronate. The sequence is that of Layilin (LAYN) from Homo sapiens (Human).